Here is a 159-residue protein sequence, read N- to C-terminus: U1 small nuclear ribonucleoprotein C (159 aa).

Residues 4–36 (FYCDYCDTYLTHDSPSVRKTHCSGRKHKENVKD) form a Matrin-type zinc finger. At tyrosine 8 the chain carries Phosphotyrosine. Serine 17 carries the phosphoserine modification. At lysine 52 the chain carries N6-acetyllysine. The tract at residues 62-96 (IPPAPFSAPPPAGAMIPPPPSLPGPPRPGMMPAPH) is disordered. Residues 63 to 92 (PPAPFSAPPPAGAMIPPPPSLPGPPRPGMM) show a composition bias toward pro residues.

It belongs to the U1 small nuclear ribonucleoprotein C family. In terms of assembly, component of the U1 snRNP. The U1 snRNP is composed of the U1 snRNA and the 7 core Sm proteins SNRPB, SNRPD1, SNRPD2, SNRPD3, SNRPE, SNRPF and SNRPG that assemble in a heptameric protein ring on the Sm site of the small nuclear RNA to form the core snRNP, and at least 3 U1 snRNP-specific proteins SNRNP70/U1-70K, SNRPA/U1-A and SNRPC/U1-C. SNRPC/U1-C interacts with U1 snRNA and the 5' splice-site region of the pre-mRNA. Interacts (via N-terminus) with TIA1 (via C-terminus); thereby promoting spliceosomal U1 snRNP recruitment to 5' splice sites.

It localises to the nucleus. In terms of biological role, component of the spliceosomal U1 snRNP, which is essential for recognition of the pre-mRNA 5' splice-site and the subsequent assembly of the spliceosome. SNRPC/U1-C is directly involved in initial 5' splice-site recognition for both constitutive and regulated alternative splicing. The interaction with the 5' splice-site seems to precede base-pairing between the pre-mRNA and the U1 snRNA. Stimulates commitment or early (E) complex formation by stabilizing the base pairing of the 5' end of the U1 snRNA and the 5' splice-site region. The sequence is that of U1 small nuclear ribonucleoprotein C from Rattus norvegicus (Rat).